The following is a 455-amino-acid chain: Phosphomethylpyrimidine synthase (455 aa).

Substrate is bound by residues Asn-80, Met-109, Tyr-139, His-175, 195-197, 236-239, and Glu-275; these read SRG and DALR. His-279 contributes to the Zn(2+) binding site. Residue Tyr-302 coordinates substrate. Zn(2+) is bound at residue His-343. [4Fe-4S] cluster contacts are provided by Cys-423, Cys-426, and Cys-431.

It belongs to the ThiC family. It depends on [4Fe-4S] cluster as a cofactor.

It catalyses the reaction 5-amino-1-(5-phospho-beta-D-ribosyl)imidazole + S-adenosyl-L-methionine = 4-amino-2-methyl-5-(phosphooxymethyl)pyrimidine + CO + 5'-deoxyadenosine + formate + L-methionine + 3 H(+). Its pathway is cofactor biosynthesis; thiamine diphosphate biosynthesis. Catalyzes the synthesis of the hydroxymethylpyrimidine phosphate (HMP-P) moiety of thiamine from aminoimidazole ribotide (AIR) in a radical S-adenosyl-L-methionine (SAM)-dependent reaction. This chain is Phosphomethylpyrimidine synthase, found in Synechococcus sp. (strain JA-3-3Ab) (Cyanobacteria bacterium Yellowstone A-Prime).